A 200-amino-acid chain; its full sequence is NAD(P)H dehydrogenase (quinone) (200 aa).

One can recognise a Flavodoxin-like domain in the interval 4-191; sequence VLVLYYSSYG…DIARYQGKRV (188 aa). FMN contacts are provided by residues 10-15 and 79-81; these read SSYGHV and TRF. Residue tyrosine 12 coordinates NAD(+). Position 99 (tryptophan 99) interacts with substrate. FMN-binding positions include 114–120 and histidine 135; that span reads STGTQHG.

The protein belongs to the WrbA family. It depends on FMN as a cofactor.

The catalysed reaction is a quinone + NADH + H(+) = a quinol + NAD(+). It catalyses the reaction a quinone + NADPH + H(+) = a quinol + NADP(+). The polypeptide is NAD(P)H dehydrogenase (quinone) (Burkholderia lata (strain ATCC 17760 / DSM 23089 / LMG 22485 / NCIMB 9086 / R18194 / 383)).